A 464-amino-acid polypeptide reads, in one-letter code: Protein phosphatase 2C homolog 2 (464 aa).

One can recognise a PPM-type phosphatase domain in the interval alanine 23–leucine 292. Mn(2+) is bound by residues aspartate 62, glycine 63, aspartate 234, and aspartate 283. An interaction with IRE1 region spans residues aspartate 174 to histidine 355. Disordered stretches follow at residues serine 361–proline 398 and glutamine 434–glutamine 464. The segment covering aspartate 366–asparagine 384 has biased composition (acidic residues). Phosphothreonine is present on residues threonine 376 and threonine 380. The segment covering aspartate 386 to serine 396 has biased composition (polar residues). The segment covering proline 448–alanine 458 has biased composition (basic and acidic residues).

It belongs to the PP2C family. As to quaternary structure, interacts with IRE1 (when phosphorylated); the interaction is direct and serves to attenuate the endoplasmic reticulum unfolded protein response. Interacts (when phosphorylated) with RAD53 (via domain FHA 1); the interaction is direct and serves to regulate DNA damage checkpoint signaling. Interacts with the ATG17-ATG29-ATG31 and ATG1-ATG13 supercomplex; to regulate induction of autophagy. The cofactor is Mg(2+). Mn(2+) is required as a cofactor.

It is found in the nucleus. The protein localises to the cytoplasm. Its subcellular location is the cytosol. It catalyses the reaction O-phospho-L-seryl-[protein] + H2O = L-seryl-[protein] + phosphate. The enzyme catalyses O-phospho-L-threonyl-[protein] + H2O = L-threonyl-[protein] + phosphate. Functionally, dephosphorylating regulator for many key proteins. Dephosphorylates the cell cycle master regulator CDC28/cyclin-dependent kinase 1; its activity appears redundant with phosphatase PTC3. Dephosphorylates HOG1 at 'Thr-171', to attenuate activation of the stress-activated p38MAPK cascade; its activity appears redundant with phosphatase PTC3. Positively regulates both nonselective macroautophagy as well as the selective cytoplasm-to-vacuole (cvt) autophagy pathway and the genotoxin-induced targeted autophagy (GTA) pathway, possibly by dephosphorylating ATG13 to enable the interaction between the ATG17-ATG29-ATG31 and ATG1-ATG13 complexes; its activity appears redundant with phosphatase PTC3. Dephosphorylates RAD53, to regulate DNA damage checkpoint signaling. Dephosphorylates IRE1, to negatively regulate the endoplasmic reticulum unfolded protein response. The chain is Protein phosphatase 2C homolog 2 (PTC2) from Saccharomyces cerevisiae (strain ATCC 204508 / S288c) (Baker's yeast).